Consider the following 430-residue polypeptide: UDP-N-acetylglucosamine 1-carboxyvinyltransferase (430 aa).

22 to 23 (KN) is a binding site for phosphoenolpyruvate. Arg-102 lines the UDP-N-acetyl-alpha-D-glucosamine pocket. Cys-126 acts as the Proton donor in catalysis. At Cys-126 the chain carries 2-(S-cysteinyl)pyruvic acid O-phosphothioketal. UDP-N-acetyl-alpha-D-glucosamine contacts are provided by residues 131 to 135 (RPVDL), 172 to 175 (KVSV), Asp-317, and Ile-339.

The protein belongs to the EPSP synthase family. MurA subfamily.

It localises to the cytoplasm. It catalyses the reaction phosphoenolpyruvate + UDP-N-acetyl-alpha-D-glucosamine = UDP-N-acetyl-3-O-(1-carboxyvinyl)-alpha-D-glucosamine + phosphate. The protein operates within cell wall biogenesis; peptidoglycan biosynthesis. Cell wall formation. Adds enolpyruvyl to UDP-N-acetylglucosamine. The chain is UDP-N-acetylglucosamine 1-carboxyvinyltransferase from Sinorhizobium medicae (strain WSM419) (Ensifer medicae).